Consider the following 151-residue polypeptide: ATP synthase subunit b' (151 aa).

The chain crosses the membrane as a helical span at residues 18–38 (TLPLMALQVVLLTFILNALFF).

This sequence belongs to the ATPase B chain family. F-type ATPases have 2 components, F(1) - the catalytic core - and F(0) - the membrane proton channel. F(1) has five subunits: alpha(3), beta(3), gamma(1), delta(1), epsilon(1). F(0) has four main subunits: a(1), b(1), b'(1) and c(10-14). The alpha and beta chains form an alternating ring which encloses part of the gamma chain. F(1) is attached to F(0) by a central stalk formed by the gamma and epsilon chains, while a peripheral stalk is formed by the delta, b and b' chains.

It is found in the cellular thylakoid membrane. In terms of biological role, f(1)F(0) ATP synthase produces ATP from ADP in the presence of a proton or sodium gradient. F-type ATPases consist of two structural domains, F(1) containing the extramembraneous catalytic core and F(0) containing the membrane proton channel, linked together by a central stalk and a peripheral stalk. During catalysis, ATP synthesis in the catalytic domain of F(1) is coupled via a rotary mechanism of the central stalk subunits to proton translocation. Functionally, component of the F(0) channel, it forms part of the peripheral stalk, linking F(1) to F(0). The b'-subunit is a diverged and duplicated form of b found in plants and photosynthetic bacteria. This chain is ATP synthase subunit b', found in Prochlorococcus marinus (strain MIT 9303).